The following is a 148-amino-acid chain: Ubiquitin-conjugating enzyme E2 30 (148 aa).

Residues 1-147 (MASKRINKEL…AQSWTQKYAM (147 aa)) enclose the UBC core domain. The active-site Glycyl thioester intermediate is the cysteine 85.

The protein belongs to the ubiquitin-conjugating enzyme family. In terms of assembly, interacts with RGLG3 and RGLG4. As to expression, ubiquitously expressed at very low levels.

It carries out the reaction S-ubiquitinyl-[E1 ubiquitin-activating enzyme]-L-cysteine + [E2 ubiquitin-conjugating enzyme]-L-cysteine = [E1 ubiquitin-activating enzyme]-L-cysteine + S-ubiquitinyl-[E2 ubiquitin-conjugating enzyme]-L-cysteine.. It participates in protein modification; protein ubiquitination. Its function is as follows. Accepts the ubiquitin from the E1 complex and catalyzes its covalent attachment to other proteins. The sequence is that of Ubiquitin-conjugating enzyme E2 30 (UBC30) from Arabidopsis thaliana (Mouse-ear cress).